A 122-amino-acid polypeptide reads, in one-letter code: MIQQETRLKVADNSGAREVLTIKVLGGSGRKTANIGDVIVCTVKNATPGGVVKKGDVVKAVVVRTKSGVRRNDGSYIKFDENACVIIRDDKGPRGTRIFGPVARELREGNFMKIVSLAPEVL.

This sequence belongs to the universal ribosomal protein uL14 family. Part of the 50S ribosomal subunit. Forms a cluster with proteins L3 and L19. In the 70S ribosome, L14 and L19 interact and together make contacts with the 16S rRNA in bridges B5 and B8.

In terms of biological role, binds to 23S rRNA. Forms part of two intersubunit bridges in the 70S ribosome. The protein is Large ribosomal subunit protein uL14 of Staphylococcus haemolyticus (strain JCSC1435).